A 352-amino-acid polypeptide reads, in one-letter code: tRNA N6-adenosine threonylcarbamoyltransferase (352 aa).

Residues histidine 115 and histidine 119 each contribute to the Fe cation site. Substrate is bound by residues 138–142 (LVSGG), aspartate 171, glycine 184, and asparagine 276. Aspartate 304 lines the Fe cation pocket.

The protein belongs to the KAE1 / TsaD family. Fe(2+) serves as cofactor.

Its subcellular location is the cytoplasm. The enzyme catalyses L-threonylcarbamoyladenylate + adenosine(37) in tRNA = N(6)-L-threonylcarbamoyladenosine(37) in tRNA + AMP + H(+). Required for the formation of a threonylcarbamoyl group on adenosine at position 37 (t(6)A37) in tRNAs that read codons beginning with adenine. Is involved in the transfer of the threonylcarbamoyl moiety of threonylcarbamoyl-AMP (TC-AMP) to the N6 group of A37, together with TsaE and TsaB. TsaD likely plays a direct catalytic role in this reaction. This is tRNA N6-adenosine threonylcarbamoyltransferase from Xanthomonas axonopodis pv. citri (strain 306).